Here is a 118-residue protein sequence, read N- to C-terminus: Small ribosomal subunit protein uS13 (118 aa).

The interval Ser94–Lys118 is disordered.

It belongs to the universal ribosomal protein uS13 family. Part of the 30S ribosomal subunit. Forms a loose heterodimer with protein S19. Forms two bridges to the 50S subunit in the 70S ribosome.

In terms of biological role, located at the top of the head of the 30S subunit, it contacts several helices of the 16S rRNA. In the 70S ribosome it contacts the 23S rRNA (bridge B1a) and protein L5 of the 50S subunit (bridge B1b), connecting the 2 subunits; these bridges are implicated in subunit movement. Contacts the tRNAs in the A and P-sites. The chain is Small ribosomal subunit protein uS13 from Idiomarina loihiensis (strain ATCC BAA-735 / DSM 15497 / L2-TR).